Consider the following 616-residue polypeptide: MALLQISEPGLSAAPHQRRLAAGIDLGTTNSLVATVRSGQVETLPDHEGRHLLPSVVHYQQQGHTVGYAARDNAAQDTANTISSVKRMMGRSLADIQARYPHLPYRFKASVNGLPMIDTAAGLLNPVRVSADILKALAARASESLSGELDGVVITVPAYFDDAQRQGTKDAARLAGLHVLRLLNEPTAAAIAYGLDSGKEGVIAVYDLGGGTFDISILRLSRGVFEVLATGGDSALGGDDFDHLLADYIREQAGIADRSDNRVQRELLDAAIAAKIALSDADTVRVNVAGWQGEITREQFNDLISALVKRTLLACRRALKDAGVDPQDVLEVVMVGGSTRVPLVRERVGEFFGRTPLTAIDPDKVVAIGAAIQADILVGNKPDSEMLLLDVIPLSLGLETMGGLVEKVIPRNTTIPVARAQDFTTFKDGQTAMSIHVMQGERELVQDCRSLARFALRGIPPLPAGGAHIRVTFQVDADGLLSVTAMEKSTGVEASIQVKPSYGLTDGEIASMIKDSMSFAEQDVKARMLAEQKVEAARVLESLTGALTADAALLSAAERQCIDDAAAHLSAVAQGDDVDAIEQAIKNVDKQTQEFAARRMDQSVRRALKGHSVDEV.

This sequence belongs to the heat shock protein 70 family.

Chaperone involved in the maturation of iron-sulfur cluster-containing proteins. Has a low intrinsic ATPase activity which is markedly stimulated by HscB. Involved in the maturation of IscU. In Salmonella agona (strain SL483), this protein is Chaperone protein HscA.